The following is an 816-amino-acid chain: Protein hunchback (816 aa).

Disordered regions lie at residues 33 to 92 (LSHH…QPMD), 129 to 151 (QQHF…GGFN), 165 to 185 (YYGG…PTAV), and 197 to 229 (ALTP…LMSN). Composition is skewed to low complexity over residues 49-60 (SNSNSGASSPRQ), 79-89 (QQQQQQQQQQQ), and 129-139 (QQHFQAAQHQQ). Thr-199 carries the post-translational modification Phosphothreonine. Residues Ser-209, Ser-228, Ser-230, and Ser-231 each carry the phosphoserine modification. Residues 219-229 (EPEKEHDLMSN) show a composition bias toward basic and acidic residues. C2H2-type zinc fingers lie at residues 261–283 (YKCK…TRTH), 290–312 (LQCA…IRKH), 318–340 (FQCD…RKSH), and 346–364 (YRCA…FKLH). 3 disordered regions span residues 387–427 (VIDV…QQQQ), 536–612 (LQQQ…QLPH), and 679–734 (GSSA…SNPT). Composition is skewed to low complexity over residues 399–427 (SKSF…QQQQ) and 536–560 (LQQQ…QQQQ). The segment covering 567–578 (NEEDEEEEEHED) has biased composition (acidic residues). Ser-584 and Ser-587 each carry phosphoserine. A compositionally biased stretch (low complexity) spans 712–734 (SASSTASSSGNSSNASSSTSNPT). 2 C2H2-type zinc fingers span residues 763–785 (YECK…MGYH) and 791–815 (FKCN…RNAH).

Belongs to the hunchback C2H2-type zinc-finger protein family.

The protein resides in the nucleus. Functionally, gap class segmentation protein that controls development of head structures. This is Protein hunchback from Drosophila virilis (Fruit fly).